Here is a 103-residue protein sequence, read N- to C-terminus: Endoribonuclease MazF3 (103 aa).

It belongs to the PemK/MazF family. Forms a complex with cognate antitoxin MazE3.

Its function is as follows. Toxic component of a type II toxin-antitoxin (TA) system. Acts as an endoribonuclease, cleaving in U-rich regions. Neutralized by cognate antitoxin MazE3. This is Endoribonuclease MazF3 (mazF3) from Mycobacterium tuberculosis (strain CDC 1551 / Oshkosh).